A 370-amino-acid polypeptide reads, in one-letter code: Cobalt-precorrin-5B C(1)-methyltransferase (370 aa).

The protein belongs to the CbiD family.

It catalyses the reaction Co-precorrin-5B + S-adenosyl-L-methionine = Co-precorrin-6A + S-adenosyl-L-homocysteine. Its pathway is cofactor biosynthesis; adenosylcobalamin biosynthesis; cob(II)yrinate a,c-diamide from sirohydrochlorin (anaerobic route): step 6/10. Catalyzes the methylation of C-1 in cobalt-precorrin-5B to form cobalt-precorrin-6A. The chain is Cobalt-precorrin-5B C(1)-methyltransferase from Pseudomonas savastanoi pv. phaseolicola (strain 1448A / Race 6) (Pseudomonas syringae pv. phaseolicola (strain 1448A / Race 6)).